The chain runs to 456 residues: MNVPRETIAAIATAQGRGGVGIVRVSGPLAGKTAQAITGRMPKPRFAHYGPFADESGQVLDEGIALYFPGPNSFTGEDVLELQGHGGPIVLDMLLQRCLQLGSRLARPGEFSERAFLNDKLDLAQAEAIADLIEASSAQAARNALRSLQGVFSQRVDNLTEKLISLRIYVEAAIDFPEEEIDFLADGHVLGMLDDVRAELSTVLREAGQGALLRDGMTVVIAGRPNAGKSSLLNALAGREAAIVTEIAGTTRDVLREHIHIDGMPLHVVDTAGLRDTQDQVEMIGVQRALKAIGEADRILLVVDATAPEAADPFALWPEFLEQRPDPAKVTLIRNKADLSGDSIALQTSADGHVTISLSARSGGEGLELLREHLKACMGYEQTSESSFSARRRHLEALRHASDSLEHGRAQLTLAGAGELLAEDLRQAQQALGEITGAFSSDDLLGRIFSSFCIGK.

(6S)-5-formyl-5,6,7,8-tetrahydrofolate is bound by residues arginine 24, glutamate 81, and lysine 120. One can recognise a TrmE-type G domain in the interval 216 to 379 (GMTVVIAGRP…LREHLKACMG (164 aa)). Position 226 (asparagine 226) interacts with K(+). GTP is bound by residues 226–231 (NAGKSS), 245–251 (TEIAGTT), 270–273 (DTAG), 335–338 (NKAD), and 359–361 (SAR). A Mg(2+)-binding site is contributed by serine 230. K(+) contacts are provided by threonine 245, isoleucine 247, and threonine 250. Mg(2+) is bound at residue threonine 251. A (6S)-5-formyl-5,6,7,8-tetrahydrofolate-binding site is contributed by lysine 456.

Belongs to the TRAFAC class TrmE-Era-EngA-EngB-Septin-like GTPase superfamily. TrmE GTPase family. As to quaternary structure, homodimer. Heterotetramer of two MnmE and two MnmG subunits. K(+) is required as a cofactor.

Its subcellular location is the cytoplasm. Exhibits a very high intrinsic GTPase hydrolysis rate. Involved in the addition of a carboxymethylaminomethyl (cmnm) group at the wobble position (U34) of certain tRNAs, forming tRNA-cmnm(5)s(2)U34. The polypeptide is tRNA modification GTPase MnmE (Pseudomonas syringae pv. tomato (strain ATCC BAA-871 / DC3000)).